A 1417-amino-acid chain; its full sequence is Cytoadherence-linked asexual protein 3.1 (1417 aa).

A signal peptide spans 1 to 24; the sequence is MVSFFKTPIFILIIFLYLNEKVIC. Intrachain disulfides connect Cys-333-Cys-361, Cys-407-Cys-413, Cys-517-Cys-545, and Cys-521-Cys-542. Residues 1204-1224 form a helical membrane-spanning segment; sequence LANGFMYAFCFFAISQMYAYF. The tract at residues 1383-1417 is disordered; that stretch reads TYIDTEKMNEADSADSDDEKDSDTPDDELMISRFH. Positions 1394–1411 are enriched in acidic residues; the sequence is DSADSDDEKDSDTPDDEL.

Self-associates. Component of the RhopH complex. RhopH complex is at least composed of CLAG3.1/CLAG3.2, RhopH2 and RhopH3 with a 1:1:1 subunit stoichiometry. CLAG3.1/CLAG3.2 mediates subunit association through independent contacts with RhopH2 and RhopH3, which do not directly interact with one another. Interacts with RhopH2. Interacts with RhopH3.

Its subcellular location is the host cell membrane. The protein resides in the host cytoplasm. The protein localises to the cytoplasmic vesicle. It is found in the secretory vesicle. It localises to the rhoptry. Participates in the formation of new permeability pathways in Plasmodium-infected erythrocytes enabling the uptake of nutrients from the blood plasma. The polypeptide is Cytoadherence-linked asexual protein 3.1 (Plasmodium falciparum).